The following is a 633-amino-acid chain: DNA mismatch repair protein MutL (633 aa).

Residues 338–407 (AAPEPERTLP…VPPPTLRAIP (70 aa)) are disordered. The segment covering 366-391 (PGSAFPAAARPAPASSAAQPPLSSSA) has biased composition (low complexity).

This sequence belongs to the DNA mismatch repair MutL/HexB family.

This protein is involved in the repair of mismatches in DNA. It is required for dam-dependent methyl-directed DNA mismatch repair. May act as a 'molecular matchmaker', a protein that promotes the formation of a stable complex between two or more DNA-binding proteins in an ATP-dependent manner without itself being part of a final effector complex. The protein is DNA mismatch repair protein MutL of Akkermansia muciniphila (strain ATCC BAA-835 / DSM 22959 / JCM 33894 / BCRC 81048 / CCUG 64013 / CIP 107961 / Muc).